The chain runs to 346 residues: Dihydroorotase (346 aa).

The Zn(2+) site is built by histidine 13 and histidine 15. Substrate-binding positions include 15-17 and asparagine 41; that span reads HLR. Zn(2+) is bound by residues lysine 99, histidine 136, and histidine 174. Lysine 99 is modified (N6-carboxylysine). Substrate is bound at residue histidine 136. Position 219 (leucine 219) interacts with substrate. Aspartate 247 contributes to the Zn(2+) binding site. Aspartate 247 is an active-site residue. Substrate contacts are provided by histidine 251 and alanine 263.

This sequence belongs to the metallo-dependent hydrolases superfamily. DHOase family. Class II DHOase subfamily. Homodimer. Requires Zn(2+) as cofactor.

It catalyses the reaction (S)-dihydroorotate + H2O = N-carbamoyl-L-aspartate + H(+). It participates in pyrimidine metabolism; UMP biosynthesis via de novo pathway; (S)-dihydroorotate from bicarbonate: step 3/3. Functionally, catalyzes the reversible cyclization of carbamoyl aspartate to dihydroorotate. This is Dihydroorotase from Rhizobium leguminosarum bv. trifolii (strain WSM2304).